The following is a 54-amino-acid chain: Ribulose bisphosphate carboxylase large chain (54 aa).

The propeptide occupies 1–2; that stretch reads MS. The residue at position 3 (proline 3) is an N-acetylproline. An N6,N6,N6-trimethyllysine modification is found at lysine 14.

The protein belongs to the RuBisCO large chain family. Type I subfamily. Heterohexadecamer of 8 large chains and 8 small chains.

Its subcellular location is the plastid. The protein resides in the chloroplast. The catalysed reaction is 2 (2R)-3-phosphoglycerate + 2 H(+) = D-ribulose 1,5-bisphosphate + CO2 + H2O. It catalyses the reaction D-ribulose 1,5-bisphosphate + O2 = 2-phosphoglycolate + (2R)-3-phosphoglycerate + 2 H(+). Its function is as follows. RuBisCO catalyzes two reactions: the carboxylation of D-ribulose 1,5-bisphosphate, the primary event in carbon dioxide fixation, as well as the oxidative fragmentation of the pentose substrate in the photorespiration process. Both reactions occur simultaneously and in competition at the same active site. The polypeptide is Ribulose bisphosphate carboxylase large chain (rbcL) (Rhamnus cathartica (Common buckthorn)).